The following is a 179-amino-acid chain: Protein TIFY 11a (179 aa).

In terms of domain architecture, Tify spans 62–97 (VDGGGQQFTIFYAGKVVVIDRCTPAMAAELMRFASA). Positions 115–140 (PIARKASLKRFLAKRKATPASARSSY) match the Jas motif. The short motif at 117-124 (ARKASLKR) is the Nuclear localization signal element.

The protein belongs to the TIFY/JAZ family. Interacts with BHLH148. Interacts with COI1A in a coronatine-dependent manner. Interacts with COI1B in a coronatine-dependent manner. Coronatine is an analog of jasmonoyl isoleucine (JA-Ile). Interacts with RSS3. Forms a ternary complex with RSS3 and BHLH094 in the nucleus. Interacts with BHLH062 and NINJA1. Interacts with MYB30. Post-translationally, ubiquitinated. Targeted for degradation by the SCF(COI1) E3 ubiquitin ligase-proteasome pathway during jasmonate signaling.

It localises to the nucleus. Functionally, repressor of jasmonate (JA) responses. Forms a ternary complex with RSS3 and BHLH94 to negatively regulate JA-responsive genes. Acts as a positive regulator of tolerance to salt stress. Involved in salt tolerance by modulating potassium homeostasis through JA signaling and regulation of the expression of potassium ion transporter genes. Acts as a transcriptional regulator targeted by the SCF(COI1) E3 ubiquitin ligase complexes in the JA signaling pathway, and interacts with BHLH062 that may directly regulate the ion transporter genes. Acts as a positive regulator of tolerance to dehydration stress. Acts as a negative regulator of tolerance to cold stress by interacting with MYB30. This is Protein TIFY 11a from Oryza sativa subsp. japonica (Rice).